Consider the following 255-residue polypeptide: 5-oxoprolinase subunit A 1 (255 aa).

The protein belongs to the LamB/PxpA family. In terms of assembly, forms a complex composed of PxpA, PxpB and PxpC.

It catalyses the reaction 5-oxo-L-proline + ATP + 2 H2O = L-glutamate + ADP + phosphate + H(+). Catalyzes the cleavage of 5-oxoproline to form L-glutamate coupled to the hydrolysis of ATP to ADP and inorganic phosphate. The polypeptide is 5-oxoprolinase subunit A 1 (Agrobacterium fabrum (strain C58 / ATCC 33970) (Agrobacterium tumefaciens (strain C58))).